A 156-amino-acid chain; its full sequence is MSKPLRGRHQARKRAVDLLFEAEARGLSPAEVVDVRTGLADTNPEVAPLQPYTAAVARGVGDHAAHIDDLISSHLQGWTLDRLPAVDRAILRVAVWELLYADDVPEPVAVDEAVQLAKELSTDDSPGFVNGVLGQVMLVTPQIRAAARAVRGPRDT.

It belongs to the NusB family.

Involved in transcription antitermination. Required for transcription of ribosomal RNA (rRNA) genes. Binds specifically to the boxA antiterminator sequence of the ribosomal RNA (rrn) operons. This Mycolicibacterium paratuberculosis (strain ATCC BAA-968 / K-10) (Mycobacterium paratuberculosis) protein is Transcription antitermination protein NusB.